The sequence spans 131 residues: Lymphocyte antigen 6C1 (131 aa).

A signal peptide spans 1–26 (MDTSHTTKSCVLILLVALLCAERAQG). In terms of domain architecture, UPAR/Ly6 spans 27–115 (LQCYECYGVP…PTAGSTWTMA (89 aa)). 5 cysteine pairs are disulfide-bonded: Cys29/Cys53, Cys32/Cys41, Cys46/Cys74, Cys78/Cys95, and Cys96/Cys101. Residue Gly109 is the site of GPI-anchor amidated glycine attachment. Positions 110–131 (STWTMAGVLLFSLSSVVLQTLL) are cleaved as a propeptide — removed in mature form.

It is found in the cell membrane. The sequence is that of Lymphocyte antigen 6C1 (Ly6c1) from Mus musculus (Mouse).